The primary structure comprises 59 residues: Large ribosomal subunit protein bL32 (59 aa).

The disordered stretch occupies residues 1–22 (MAVQQNKKSPSKRGMHRSHDFL).

The protein belongs to the bacterial ribosomal protein bL32 family.

This Thiobacillus denitrificans (strain ATCC 25259 / T1) protein is Large ribosomal subunit protein bL32.